The following is a 93-amino-acid chain: Large ribosomal subunit protein bL27 (93 aa).

Belongs to the bacterial ribosomal protein bL27 family.

The polypeptide is Large ribosomal subunit protein bL27 (Trichormus variabilis (strain ATCC 29413 / PCC 7937) (Anabaena variabilis)).